Reading from the N-terminus, the 880-residue chain is Valine--tRNA ligase (880 aa).

The short motif at 46 to 56 is the 'HIGH' region element; the sequence is PNVTGKLHLGH. Residues 520 to 524 carry the 'KMSKS' region motif; it reads KMSKS. K523 contacts ATP. A coiled-coil region spans residues 808 to 880; sequence LAGLINIEEE…KARIAELKEN (73 aa).

Belongs to the class-I aminoacyl-tRNA synthetase family. ValS type 1 subfamily. As to quaternary structure, monomer.

It is found in the cytoplasm. It carries out the reaction tRNA(Val) + L-valine + ATP = L-valyl-tRNA(Val) + AMP + diphosphate. Its function is as follows. Catalyzes the attachment of valine to tRNA(Val). As ValRS can inadvertently accommodate and process structurally similar amino acids such as threonine, to avoid such errors, it has a 'posttransfer' editing activity that hydrolyzes mischarged Thr-tRNA(Val) in a tRNA-dependent manner. The polypeptide is Valine--tRNA ligase (Lactococcus lactis subsp. lactis (strain IL1403) (Streptococcus lactis)).